We begin with the raw amino-acid sequence, 414 residues long: tRNA(Ile)-lysidine synthase (414 aa).

Position 13 to 18 (13 to 18 (SGGIDS)) interacts with ATP.

It belongs to the tRNA(Ile)-lysidine synthase family.

The protein localises to the cytoplasm. It catalyses the reaction cytidine(34) in tRNA(Ile2) + L-lysine + ATP = lysidine(34) in tRNA(Ile2) + AMP + diphosphate + H(+). Ligates lysine onto the cytidine present at position 34 of the AUA codon-specific tRNA(Ile) that contains the anticodon CAU, in an ATP-dependent manner. Cytidine is converted to lysidine, thus changing the amino acid specificity of the tRNA from methionine to isoleucine. The chain is tRNA(Ile)-lysidine synthase from Thermotoga maritima (strain ATCC 43589 / DSM 3109 / JCM 10099 / NBRC 100826 / MSB8).